The sequence spans 52 residues: DNA-directed RNA polymerase subunit Rpo12 (52 aa).

Residues cysteine 13, cysteine 30, and cysteine 33 each coordinate Zn(2+).

It belongs to the archaeal Rpo12/eukaryotic RPC10 RNA polymerase subunit family. As to quaternary structure, part of the RNA polymerase complex. Zn(2+) is required as a cofactor.

It is found in the cytoplasm. The catalysed reaction is RNA(n) + a ribonucleoside 5'-triphosphate = RNA(n+1) + diphosphate. Functionally, DNA-dependent RNA polymerase (RNAP) catalyzes the transcription of DNA into RNA using the four ribonucleoside triphosphates as substrates. The chain is DNA-directed RNA polymerase subunit Rpo12 from Pyrobaculum neutrophilum (strain DSM 2338 / JCM 9278 / NBRC 100436 / V24Sta) (Thermoproteus neutrophilus).